Here is a 283-residue protein sequence, read N- to C-terminus: Phosphatidylserine decarboxylase proenzyme (283 aa).

Catalysis depends on charge relay system; for autoendoproteolytic cleavage activity residues Asp89, His146, and Ser249. Ser249 acts as the Schiff-base intermediate with substrate; via pyruvic acid; for decarboxylase activity in catalysis. Ser249 bears the Pyruvic acid (Ser); by autocatalysis mark.

Belongs to the phosphatidylserine decarboxylase family. PSD-B subfamily. Prokaryotic type I sub-subfamily. Heterodimer of a large membrane-associated beta subunit and a small pyruvoyl-containing alpha subunit. Pyruvate is required as a cofactor. Is synthesized initially as an inactive proenzyme. Formation of the active enzyme involves a self-maturation process in which the active site pyruvoyl group is generated from an internal serine residue via an autocatalytic post-translational modification. Two non-identical subunits are generated from the proenzyme in this reaction, and the pyruvate is formed at the N-terminus of the alpha chain, which is derived from the carboxyl end of the proenzyme. The autoendoproteolytic cleavage occurs by a canonical serine protease mechanism, in which the side chain hydroxyl group of the serine supplies its oxygen atom to form the C-terminus of the beta chain, while the remainder of the serine residue undergoes an oxidative deamination to produce ammonia and the pyruvoyl prosthetic group on the alpha chain. During this reaction, the Ser that is part of the protease active site of the proenzyme becomes the pyruvoyl prosthetic group, which constitutes an essential element of the active site of the mature decarboxylase.

Its subcellular location is the cell membrane. The enzyme catalyses a 1,2-diacyl-sn-glycero-3-phospho-L-serine + H(+) = a 1,2-diacyl-sn-glycero-3-phosphoethanolamine + CO2. Its pathway is phospholipid metabolism; phosphatidylethanolamine biosynthesis; phosphatidylethanolamine from CDP-diacylglycerol: step 2/2. Its function is as follows. Catalyzes the formation of phosphatidylethanolamine (PtdEtn) from phosphatidylserine (PtdSer). The polypeptide is Phosphatidylserine decarboxylase proenzyme (Legionella pneumophila (strain Lens)).